A 417-amino-acid polypeptide reads, in one-letter code: Imidazolonepropionase (417 aa).

Residues His-80 and His-82 each coordinate Fe(3+). Zn(2+) is bound by residues His-80 and His-82. 4-imidazolone-5-propanoate contacts are provided by Arg-89, Tyr-152, and His-187. Tyr-152 is a binding site for N-formimidoyl-L-glutamate. His-252 provides a ligand contact to Fe(3+). His-252 contributes to the Zn(2+) binding site. Glu-255 is a binding site for 4-imidazolone-5-propanoate. Fe(3+) is bound at residue Asp-326. Asp-326 is a binding site for Zn(2+). N-formimidoyl-L-glutamate is bound by residues Asn-328 and Gly-330. Ser-331 contacts 4-imidazolone-5-propanoate.

Belongs to the metallo-dependent hydrolases superfamily. HutI family. Zn(2+) is required as a cofactor. The cofactor is Fe(3+).

The protein resides in the cytoplasm. It catalyses the reaction 4-imidazolone-5-propanoate + H2O = N-formimidoyl-L-glutamate. It functions in the pathway amino-acid degradation; L-histidine degradation into L-glutamate; N-formimidoyl-L-glutamate from L-histidine: step 3/3. Catalyzes the hydrolytic cleavage of the carbon-nitrogen bond in imidazolone-5-propanoate to yield N-formimidoyl-L-glutamate. It is the third step in the universal histidine degradation pathway. This Bacteroides thetaiotaomicron (strain ATCC 29148 / DSM 2079 / JCM 5827 / CCUG 10774 / NCTC 10582 / VPI-5482 / E50) protein is Imidazolonepropionase.